The following is a 303-amino-acid chain: Oxygen-dependent coproporphyrinogen-III oxidase (303 aa).

Residue Ser-93 coordinates substrate. A divalent metal cation-binding residues include His-97 and His-107. His-107 acts as the Proton donor in catalysis. 109-111 contributes to the substrate binding site; sequence NVR. Positions 146 and 176 each coordinate a divalent metal cation. Residues 241 to 276 are important for dimerization; it reads YVEFNLVYDRGTLFGLQSGGRTESILMSLPPQVRWG. Residue 259 to 261 participates in substrate binding; it reads GGR.

It belongs to the aerobic coproporphyrinogen-III oxidase family. In terms of assembly, homodimer. A divalent metal cation is required as a cofactor.

It is found in the cytoplasm. It catalyses the reaction coproporphyrinogen III + O2 + 2 H(+) = protoporphyrinogen IX + 2 CO2 + 2 H2O. The protein operates within porphyrin-containing compound metabolism; protoporphyrin-IX biosynthesis; protoporphyrinogen-IX from coproporphyrinogen-III (O2 route): step 1/1. Functionally, involved in the heme biosynthesis. Catalyzes the aerobic oxidative decarboxylation of propionate groups of rings A and B of coproporphyrinogen-III to yield the vinyl groups in protoporphyrinogen-IX. The protein is Oxygen-dependent coproporphyrinogen-III oxidase of Pseudomonas putida (strain W619).